Here is a 777-residue protein sequence, read N- to C-terminus: Endonuclease MutS2 (777 aa).

328–335 contributes to the ATP binding site; it reads GPNTGGKT. The region spanning 702-777 is the Smr domain; the sequence is LDIRGMNTLE…GDGATEVYLK (76 aa).

Belongs to the DNA mismatch repair MutS family. MutS2 subfamily. In terms of assembly, homodimer. Binds to stalled ribosomes, contacting rRNA.

Its function is as follows. Endonuclease that is involved in the suppression of homologous recombination and thus may have a key role in the control of bacterial genetic diversity. Functionally, acts as a ribosome collision sensor, splitting the ribosome into its 2 subunits. Detects stalled/collided 70S ribosomes which it binds and splits by an ATP-hydrolysis driven conformational change. Acts upstream of the ribosome quality control system (RQC), a ribosome-associated complex that mediates the extraction of incompletely synthesized nascent chains from stalled ribosomes and their subsequent degradation. Probably generates substrates for RQC. In Carboxydothermus hydrogenoformans (strain ATCC BAA-161 / DSM 6008 / Z-2901), this protein is Endonuclease MutS2.